Reading from the N-terminus, the 259-residue chain is Archaerhodopsin-2 (259 aa).

Positions 1–6 (MDPIAL) are excised as a propeptide. At glutamine 7 the chain carries Pyrrolidone carboxylic acid. Topologically, residues 7 to 18 (QAGFDLLNDGRP) are extracellular. A helical transmembrane segment spans residues 19–40 (ETLWLGIGTLLMLIGTFYFIAR). At 41–49 (GWGVTDKEA) the chain is on the cytoplasmic side. Residues 50 to 71 (REYYAITILVPGIASAAYLAMF) traverse the membrane as a helical segment. The Extracellular portion of the chain corresponds to 72–90 (FGIGVTEVELASGTVLDIY). Residues 91–112 (YARYADWLFTTPLLLLDLALLA) form a helical membrane-spanning segment. Over 113 to 115 (KVD) the chain is Cytoplasmic. A helical membrane pass occupies residues 116–138 (RVTIGTLIGVDALMIVTGLIGAL). The Extracellular segment spans residues 139 to 142 (SKTP). Residues 143–171 (LARYTWWLFSTIAFLFVLYYLLTSLRSAA) traverse the membrane as a helical segment. Over 172-174 (AKR) the chain is Cytoplasmic. A helical transmembrane segment spans residues 175–203 (SEEVRSTFNTLTALVAVLWTAYPILWIVG). Residues 204 to 211 (TEGAGVVG) are Extracellular-facing. Residues 212–244 (LGIETLAFMVLDVTAKVGFGFVLLRSRAILGET) form a helical membrane-spanning segment. The residue at position 227 (lysine 227) is an N6-(retinylidene)lysine. At 245 to 259 (EAPEPSAGADASAAD) the chain is on the cytoplasmic side.

The protein belongs to the archaeal/bacterial/fungal opsin family.

The protein resides in the cell membrane. Functionally, light-driven proton pump. It may interact with bacterioruberin in the claret membrane. The chain is Archaerhodopsin-2 from Halobacterium sp. (strain aus-2).